Here is a 412-residue protein sequence, read N- to C-terminus: Serine hydroxymethyltransferase (412 aa).

(6S)-5,6,7,8-tetrahydrofolate is bound by residues Leu-117 and 121 to 123; that span reads GHL. Residue Lys-226 is modified to N6-(pyridoxal phosphate)lysine. 349-351 contributes to the (6S)-5,6,7,8-tetrahydrofolate binding site; that stretch reads SPF.

It belongs to the SHMT family. Homodimer. The cofactor is pyridoxal 5'-phosphate.

The protein localises to the cytoplasm. The catalysed reaction is (6R)-5,10-methylene-5,6,7,8-tetrahydrofolate + glycine + H2O = (6S)-5,6,7,8-tetrahydrofolate + L-serine. The protein operates within one-carbon metabolism; tetrahydrofolate interconversion. It functions in the pathway amino-acid biosynthesis; glycine biosynthesis; glycine from L-serine: step 1/1. Catalyzes the reversible interconversion of serine and glycine with tetrahydrofolate (THF) serving as the one-carbon carrier. This reaction serves as the major source of one-carbon groups required for the biosynthesis of purines, thymidylate, methionine, and other important biomolecules. Also exhibits THF-independent aldolase activity toward beta-hydroxyamino acids, producing glycine and aldehydes, via a retro-aldol mechanism. In Geobacillus kaustophilus (strain HTA426), this protein is Serine hydroxymethyltransferase.